The primary structure comprises 500 residues: Cytochrome P450 71D7 (500 aa).

C441 serves as a coordination point for heme.

The protein belongs to the cytochrome P450 family. Heme is required as a cofactor.

The protein is Cytochrome P450 71D7 (CYP71D7) of Solanum chacoense (Chaco potato).